We begin with the raw amino-acid sequence, 231 residues long: ATP synthase subunit a (231 aa).

5 consecutive transmembrane segments (helical) span residues 14–34 (GFLK…VLAV), 78–98 (YLGF…CTVI), 107–127 (SLST…FFGI), 174–194 (MIIG…MTAL), and 196–216 (LLTG…YIAA).

This sequence belongs to the ATPase A chain family. As to quaternary structure, F-type ATPases have 2 components, CF(1) - the catalytic core - and CF(0) - the membrane proton channel. CF(1) has five subunits: alpha(3), beta(3), gamma(1), delta(1), epsilon(1). CF(0) has three main subunits: a(1), b(2) and c(9-12). The alpha and beta chains form an alternating ring which encloses part of the gamma chain. CF(1) is attached to CF(0) by a central stalk formed by the gamma and epsilon chains, while a peripheral stalk is formed by the delta and b chains.

The protein localises to the cell inner membrane. Functionally, key component of the proton channel; it plays a direct role in the translocation of protons across the membrane. The polypeptide is ATP synthase subunit a (Albidiferax ferrireducens (strain ATCC BAA-621 / DSM 15236 / T118) (Rhodoferax ferrireducens)).